Consider the following 273-residue polypeptide: Large ribosomal subunit protein uL2 (273 aa).

Disordered regions lie at residues 28 to 53 and 221 to 273; these read KPFAPLLEKNSKSGGRNNNGRITTRH and RGTA…RRSK. Positions 39–48 are enriched in low complexity; the sequence is KSGGRNNNGR.

This sequence belongs to the universal ribosomal protein uL2 family. In terms of assembly, part of the 50S ribosomal subunit. Forms a bridge to the 30S subunit in the 70S ribosome.

Its function is as follows. One of the primary rRNA binding proteins. Required for association of the 30S and 50S subunits to form the 70S ribosome, for tRNA binding and peptide bond formation. It has been suggested to have peptidyltransferase activity; this is somewhat controversial. Makes several contacts with the 16S rRNA in the 70S ribosome. In Klebsiella pneumoniae (strain 342), this protein is Large ribosomal subunit protein uL2.